The sequence spans 748 residues: Tyrosine--tRNA ligase 2, cytoplasmic (748 aa).

At Met-1 the chain carries N-acetylmethionine. The short motif at 441-449 (PSGRMHIAQ) is the 'HIGH' region element. Residues Tyr-564, Gln-568, Asp-571, and Gln-586 each contribute to the L-tyrosine site. Positions 623-627 (KMSKS) match the 'KMSKS' region motif. Lys-626 serves as a coordination point for ATP.

This sequence belongs to the class-I aminoacyl-tRNA synthetase family.

It localises to the cytoplasm. The protein localises to the cytosol. The enzyme catalyses tRNA(Tyr) + L-tyrosine + ATP = L-tyrosyl-tRNA(Tyr) + AMP + diphosphate + H(+). In terms of biological role, catalyzes the attachment of tyrosine to tRNA(Tyr) in a two-step reaction: tyrosine is first activated by ATP to form Tyr-AMP and then transferred to the acceptor end of tRNA(Tyr). The sequence is that of Tyrosine--tRNA ligase 2, cytoplasmic from Arabidopsis thaliana (Mouse-ear cress).